The chain runs to 864 residues: Leucine--tRNA ligase (864 aa).

Positions 42–52 (PYPSGKLHMGH) match the 'HIGH' region motif. The short motif at 624 to 628 (KMSKS) is the 'KMSKS' region element. Lys627 serves as a coordination point for ATP.

The protein belongs to the class-I aminoacyl-tRNA synthetase family.

It localises to the cytoplasm. The enzyme catalyses tRNA(Leu) + L-leucine + ATP = L-leucyl-tRNA(Leu) + AMP + diphosphate. This Burkholderia pseudomallei (strain 1106a) protein is Leucine--tRNA ligase.